We begin with the raw amino-acid sequence, 259 residues long: MSLDLVHFPNYKKTFFGSSFQSDTLALLTRIRDEIGCRYVTHTYRGRVGDCTKVNSADLTVLMTLPATWVARYSSKNYFAIDPVFQEDAPYYRNDTSAIARDLKEDADICPAVAELLHDAEKHGLGNLFIAVSARNPKGVAGCTVFTFEVEDEDRTQFLARMRPRLLSLAGIIHGTVCGCKDANSVASLLTPREVDCLRWAANGKTDGEIAEILSIARWTVVTYLQNAKIKLNCSNRTSAVATALSLGIIDMPEVQHLV.

Residues 76–179 (KNYFAIDPVF…AGIIHGTVCG (104 aa)) are C12-HSL binding. Residues 183–248 (ANSVASLLTP…SAVATALSLG (66 aa)) enclose the HTH luxR-type domain. A DNA-binding region (H-T-H motif) is located at residues 207 to 226 (DGEIAEILSIARWTVVTYLQ).

In terms of biological role, transcriptional regulator involved in the global control of Brucella gene expression. Mediates the effects of the quorum sensing autoinducer C12-HSL (N-dodecanoyl-homoserine lactone) on a large and diverse number of genes. This Brucella suis biovar 1 (strain 1330) protein is HTH-type quorum sensing-dependent transcriptional regulator VjbR (vjbR).